Here is a 562-residue protein sequence, read N- to C-terminus: Bacillolysin (562 aa).

An N-terminal signal peptide occupies residues 1–24; the sequence is MKKKKQALKVLLSVGILSSSFAFA. Residues 25 to 245 constitute a propeptide, activation peptide; sequence HTSSAAPNNV…KQAAKPAAKP (221 aa). 3 residues coordinate Ca(2+): Asp-303, Asp-305, and Asp-384. His-388 lines the Zn(2+) pocket. Residue Glu-389 is part of the active site. Residues His-392 and Glu-412 each contribute to the Zn(2+) site. Ca(2+) is bound by residues Glu-423, Asn-429, Asp-431, Glu-433, Glu-436, Tyr-439, Thr-440, and Asp-446. His-477 acts as the Proton donor in catalysis.

Belongs to the peptidase M4 family. Ca(2+) serves as cofactor. It depends on Zn(2+) as a cofactor.

It localises to the secreted. The catalysed reaction is Similar, but not identical, to that of thermolysin.. Its function is as follows. Extracellular zinc metalloprotease. The polypeptide is Bacillolysin (nprM) (Priestia megaterium (strain DSM 319 / IMG 1521) (Bacillus megaterium)).